We begin with the raw amino-acid sequence, 227 residues long: UPF0173 metal-dependent hydrolase DR_0006 (227 aa).

This sequence belongs to the UPF0173 family.

The sequence is that of UPF0173 metal-dependent hydrolase DR_0006 from Deinococcus radiodurans (strain ATCC 13939 / DSM 20539 / JCM 16871 / CCUG 27074 / LMG 4051 / NBRC 15346 / NCIMB 9279 / VKM B-1422 / R1).